A 206-amino-acid chain; its full sequence is Ribosomal RNA small subunit methyltransferase G (206 aa).

S-adenosyl-L-methionine-binding positions include Gly71, Phe76, 125–126, and Arg139; that span reads IE.

The protein belongs to the methyltransferase superfamily. RNA methyltransferase RsmG family.

It is found in the cytoplasm. It carries out the reaction guanosine(527) in 16S rRNA + S-adenosyl-L-methionine = N(7)-methylguanosine(527) in 16S rRNA + S-adenosyl-L-homocysteine. Its function is as follows. Specifically methylates the N7 position of guanine in position 527 of 16S rRNA. The protein is Ribosomal RNA small subunit methyltransferase G of Cereibacter sphaeroides (strain ATCC 17023 / DSM 158 / JCM 6121 / CCUG 31486 / LMG 2827 / NBRC 12203 / NCIMB 8253 / ATH 2.4.1.) (Rhodobacter sphaeroides).